The chain runs to 216 residues: GTP cyclohydrolase 1 (216 aa).

Residues cysteine 108, histidine 111, and cysteine 179 each coordinate Zn(2+).

This sequence belongs to the GTP cyclohydrolase I family. In terms of assembly, toroid-shaped homodecamer, composed of two pentamers of five dimers.

It carries out the reaction GTP + H2O = 7,8-dihydroneopterin 3'-triphosphate + formate + H(+). It participates in cofactor biosynthesis; 7,8-dihydroneopterin triphosphate biosynthesis; 7,8-dihydroneopterin triphosphate from GTP: step 1/1. This is GTP cyclohydrolase 1 from Shewanella sp. (strain ANA-3).